A 160-amino-acid chain; its full sequence is Endoribonuclease YbeY (160 aa).

Positions 111, 115, and 121 each coordinate Zn(2+).

It belongs to the endoribonuclease YbeY family. Zn(2+) is required as a cofactor.

It is found in the cytoplasm. In terms of biological role, single strand-specific metallo-endoribonuclease involved in late-stage 70S ribosome quality control and in maturation of the 3' terminus of the 16S rRNA. In Stutzerimonas stutzeri (strain A1501) (Pseudomonas stutzeri), this protein is Endoribonuclease YbeY.